The following is a 192-amino-acid chain: UPF0149 protein KPK_0755 (192 aa).

It belongs to the UPF0149 family.

In Klebsiella pneumoniae (strain 342), this protein is UPF0149 protein KPK_0755.